We begin with the raw amino-acid sequence, 265 residues long: MEDKKEEGESEIQEHGPEHWFSKWERQCLAEAEQEDQPEEEAEQSQQKLWHLFQNSATAVAQLYKDRVCQQQGLSLWVPFQNAATAVTNLYKESVDAHQRSFDLGIQIGYQRRNKDVLAWVKKRRRTIRREDLISFLCGKVPPPRNSRAPPRLTVVSPNRATPTETGSSVETDLQPFREAIALHGLSGAMASISVRSSTPGSPTHVSGSSNTGRRRNGLHDVDLNTFISEEMALHLDNGGTRKRTSAQCGDVITDSPTHKRNRMI.

4 disordered regions span residues 1–22 (MEDK…HWFS), 145–170 (RNSR…GSSV), 195–218 (VRSS…RRNG), and 240–265 (GTRK…NRMI). Composition is skewed to polar residues over residues 156-170 (VSPN…GSSV) and 195-212 (VRSS…SSNT).

The protein belongs to the HAPSTR1 family. As to quaternary structure, oligomer.

It is found in the nucleus. Its subcellular location is the cytoplasm. In terms of biological role, acts as a central player within a network of stress response pathways promoting cellular adaptability. Functions as a negative regulator of TP53/P53 in the cellular response to telomere erosion and probably also DNA damage. This is HUWE1-associated protein modifying stress responses from Xenopus tropicalis (Western clawed frog).